Reading from the N-terminus, the 486-residue chain is Homoserine O-acetyltransferase (486 aa).

In terms of domain architecture, AB hydrolase-1 spans 66-436; it reads NVLVICHALT…PEGHDAFLLE (371 aa). The active site involves Ser-162. Ser-162 (nucleophile) is an active-site residue. The interval 248 to 274 is disordered; sequence KFSRRSPSIAQQQKAQKAEVRKPSTVS. The segment covering 250 to 262 has biased composition (polar residues); sequence SRRSPSIAQQQKA. Active-site residues include Asp-401 and His-430.

The protein belongs to the AB hydrolase superfamily. MetX family.

It carries out the reaction L-homoserine + acetyl-CoA = O-acetyl-L-homoserine + CoA. Its pathway is amino-acid biosynthesis; L-methionine biosynthesis via de novo pathway; O-acetyl-L-homoserine from L-homoserine: step 1/1. In terms of biological role, commits homoserine to the methionine biosynthesis pathway by catalyzing its O-acetylation. This chain is Homoserine O-acetyltransferase (MET2), found in Saccharomyces pastorianus (Lager yeast).